An 81-amino-acid chain; its full sequence is Large ribosomal subunit protein bL31B (81 aa).

The protein belongs to the bacterial ribosomal protein bL31 family. Type B subfamily. As to quaternary structure, part of the 50S ribosomal subunit.

In Bacillus anthracis (strain A0248), this protein is Large ribosomal subunit protein bL31B.